The chain runs to 116 residues: Ribosome-binding factor A (116 aa).

This sequence belongs to the RbfA family. In terms of assembly, monomer. Binds 30S ribosomal subunits, but not 50S ribosomal subunits or 70S ribosomes.

Its subcellular location is the cytoplasm. In terms of biological role, one of several proteins that assist in the late maturation steps of the functional core of the 30S ribosomal subunit. Associates with free 30S ribosomal subunits (but not with 30S subunits that are part of 70S ribosomes or polysomes). Required for efficient processing of 16S rRNA. May interact with the 5'-terminal helix region of 16S rRNA. This chain is Ribosome-binding factor A, found in Mycoplasma pneumoniae (strain ATCC 29342 / M129 / Subtype 1) (Mycoplasmoides pneumoniae).